The primary structure comprises 287 residues: Prepilin leader peptidase/N-methyltransferase (287 aa).

6 helical membrane passes run 10 to 30, 101 to 121, 125 to 145, 177 to 197, 226 to 246, and 253 to 273; these read LGFPAAAGLGLLIGSFLNVVI, ISIQYPLVELLTSILCVASVW, FGWQGFGAIVLSCFLVAMSGI, KPALLGAAVGYVSLWTVWWLF, ILPIILISSLVGAVLGSIWLF, and ATPIPFGPYLAIAGWVVFFWG.

The protein belongs to the peptidase A24 family.

The protein resides in the cell inner membrane. It carries out the reaction Typically cleaves a -Gly-|-Phe- bond to release an N-terminal, basic peptide of 5-8 residues from type IV prepilin, and then N-methylates the new N-terminal amino group, the methyl donor being S-adenosyl-L-methionine.. In terms of biological role, plays an essential role in type IV pili and type II pseudopili formation by proteolytically removing the leader sequence from substrate proteins and subsequently monomethylating the alpha-amino group of the newly exposed N-terminal phenylalanine. The polypeptide is Prepilin leader peptidase/N-methyltransferase (xpsO) (Xanthomonas campestris pv. campestris (strain ATCC 33913 / DSM 3586 / NCPPB 528 / LMG 568 / P 25)).